The sequence spans 321 residues: Cytochrome f (321 aa).

The first 38 residues, 1–38, serve as a signal peptide directing secretion; it reads MINLFLLKYKTAFSTFLKPFAYLSLILSVCFYSIQAQA. Residues Phe39, Cys59, Cys62, and His63 each contribute to the heme site. A helical membrane pass occupies residues 287-306; the sequence is VKGLIAFFFTVILAQILLVL.

It belongs to the cytochrome f family. As to quaternary structure, the 4 large subunits of the cytochrome b6-f complex are cytochrome b6, subunit IV (17 kDa polypeptide, petD), cytochrome f and the Rieske protein, while the 4 small subunits are PetG, PetL, PetM and PetN. The complex functions as a dimer. The cofactor is heme.

The protein resides in the plastid. The protein localises to the chloroplast thylakoid membrane. In terms of biological role, component of the cytochrome b6-f complex, which mediates electron transfer between photosystem II (PSII) and photosystem I (PSI), cyclic electron flow around PSI, and state transitions. The protein is Cytochrome f (petA) of Guillardia theta (Cryptophyte).